The primary structure comprises 405 residues: Multifunctional CCA protein (405 aa).

2 residues coordinate ATP: G8 and R11. Residues G8 and R11 each coordinate CTP. Residues D21 and D23 each contribute to the Mg(2+) site. Residues R91, R137, and R140 each coordinate ATP. CTP is bound by residues R91, R137, and R140. The region spanning 228 to 329 (TGIHSMMVLE…NDFLDKCDVW (102 aa)) is the HD domain.

Belongs to the tRNA nucleotidyltransferase/poly(A) polymerase family. Bacterial CCA-adding enzyme type 1 subfamily. Monomer. Can also form homodimers and oligomers. The cofactor is Mg(2+). Ni(2+) serves as cofactor.

It carries out the reaction a tRNA precursor + 2 CTP + ATP = a tRNA with a 3' CCA end + 3 diphosphate. It catalyses the reaction a tRNA with a 3' CCA end + 2 CTP + ATP = a tRNA with a 3' CCACCA end + 3 diphosphate. Catalyzes the addition and repair of the essential 3'-terminal CCA sequence in tRNAs without using a nucleic acid template. Adds these three nucleotides in the order of C, C, and A to the tRNA nucleotide-73, using CTP and ATP as substrates and producing inorganic pyrophosphate. tRNA 3'-terminal CCA addition is required both for tRNA processing and repair. Also involved in tRNA surveillance by mediating tandem CCA addition to generate a CCACCA at the 3' terminus of unstable tRNAs. While stable tRNAs receive only 3'-terminal CCA, unstable tRNAs are marked with CCACCA and rapidly degraded. This chain is Multifunctional CCA protein, found in Pseudoalteromonas atlantica (strain T6c / ATCC BAA-1087).